A 215-amino-acid polypeptide reads, in one-letter code: Large ribosomal subunit protein uL3 (215 aa).

Glutamine 153 bears the N5-methylglutamine mark.

Belongs to the universal ribosomal protein uL3 family. As to quaternary structure, part of the 50S ribosomal subunit. Forms a cluster with proteins L14 and L19. In terms of processing, methylated by PrmB.

In terms of biological role, one of the primary rRNA binding proteins, it binds directly near the 3'-end of the 23S rRNA, where it nucleates assembly of the 50S subunit. This Nitrosococcus oceani (strain ATCC 19707 / BCRC 17464 / JCM 30415 / NCIMB 11848 / C-107) protein is Large ribosomal subunit protein uL3.